A 328-amino-acid polypeptide reads, in one-letter code: D-cysteine desulfhydrase (328 aa).

Residue Lys-51 is modified to N6-(pyridoxal phosphate)lysine.

It belongs to the ACC deaminase/D-cysteine desulfhydrase family. Homodimer. Requires pyridoxal 5'-phosphate as cofactor.

It catalyses the reaction D-cysteine + H2O = hydrogen sulfide + pyruvate + NH4(+) + H(+). Catalyzes the alpha,beta-elimination reaction of D-cysteine and of several D-cysteine derivatives. It could be a defense mechanism against D-cysteine. The protein is D-cysteine desulfhydrase of Escherichia coli O6:H1 (strain CFT073 / ATCC 700928 / UPEC).